Here is a 614-residue protein sequence, read N- to C-terminus: Vitamin B12 transporter BtuB (614 aa).

Positions 1–20 (MIKKASLLTACSVTAFSAWA) are cleaved as a signal peptide. The short motif at 26–33 (DTLVVTAN) is the TonB box element. The 115-residue stretch at 38–152 (PRSTVLAPTT…IGGVVNIITT (115 aa)) folds into the TBDR plug domain. Cyanocob(III)alamin is bound by residues Leu-83, Ser-85, Asn-92, and 110-111 (VS). Positions 155 to 614 (HPGTEISAGW…EYTLXGSYTF (460 aa)) constitute a TBDR beta-barrel domain. Beta stranded transmembrane passes span 158-165 (TEISAGWG), 169-178 (YQNYDVSTQQ), and 184-195 (TRVTLLGDYAHT). Positions 199, 211, 213, and 215 each coordinate Ca(2+). Beta stranded transmembrane passes span 217–227 (FLSKTLYGALE) and 232–248 (DAWS…NRTN). The Ca(2+) site is built by Tyr-249 and Asp-250. Ala-251 is a binding site for cyanocob(III)alamin. Position 261 (Asp-261) interacts with Ca(2+). Transmembrane regions (beta stranded) follow at residues 263–277 (RKLY…LRYN), 279–296 (ELIK…KDYN), 309–325 (TLDE…NNII), 328–337 (HGNIGAGVDW), 353–369 (YDQR…QQVG), 371–381 (FTFEGAGRSDD), 385–400 (FGRH…WEFI), 403–417 (YRFI…KAPN), 434–443 (KSKQWEGAFE), 449–458 (VNWRISGYRN), 473–490 (YYNE…TANF), 494–509 (PLTH…ARNA), 517–529 (RRAK…QLDW), and 535–550 (DWGI…YDKD). Thr-309 is a cyanocob(III)alamin binding site. Position 517 (Arg-517) interacts with cyanocob(III)alamin. Residue Tyr-551 participates in cyanocob(III)alamin binding. The next 3 beta stranded transmembrane spans lie at 558–572 (TVKM…LAVA), 585–596 (IANLFDKDYETV), and 602–614 (AGRE…SYTF). Positions 597–614 (YGYQTAGREYTLXGSYTF) match the TonB C-terminal box motif.

The protein belongs to the TonB-dependent receptor family. BtuB (TC 1.B.14.3.1) subfamily.

The protein localises to the cell outer membrane. Functionally, involved in the active translocation of vitamin B12 (cyanocobalamin) across the outer membrane to the periplasmic space. It derives its energy for transport by interacting with the trans-periplasmic membrane protein TonB. The protein is Vitamin B12 transporter BtuB of Escherichia coli O6:H1 (strain CFT073 / ATCC 700928 / UPEC).